The chain runs to 513 residues: Protein PNS1 (513 aa).

Pro residues predominate over residues 1–13 (MSNNNYPPPPNPP). The disordered stretch occupies residues 1 to 41 (MSNNNYPPPPNPPNYQGEEQVHNVQPDLENNQEKYYAEQPQ). The Cytoplasmic portion of the chain corresponds to 1–60 (MSNNNYPPPPNPPNYQGEEQVHNVQPDLENNQEKYYAEQPQPSQQFEESFKIDKPKWNDW). The helical transmembrane segment at 61 to 81 (PFTVFFLLTVAGFIAIAGITL) threads the bilayer. The Extracellular segment spans residues 82–108 (NALKKTYGLQGSSIYNSTDTFTLNTNT). An N-linked (GlcNAc...) asparagine glycan is attached at Asn97. Residues 109–129 (IILFGFIIVVGVVLSVLIIVY) form a helical membrane-spanning segment. Residues 130–136 (ARMAPRV) lie on the Cytoplasmic side of the membrane. A helical transmembrane segment spans residues 137–157 (FITTGLILNIILGLGTCIYYF). The Extracellular portion of the chain corresponds to 158–163 (VAHYYS). The chain crosses the membrane as a helical span at residues 164–182 (AAIVFLVFTLFTAWCYWSC). The Cytoplasmic portion of the chain corresponds to 183-210 (RHRIPFSATVLEITIDVMKRYPSTLITS). A helical transmembrane segment spans residues 211-231 (FIGIIVSGLFSTLFSVVIVAT). Over 232–251 (YVKYDPDSQGCDVAGGGCSQ) the chain is Extracellular. Residues 252–272 (SKLIGVLVFVFFAGYYISEVI) traverse the membrane as a helical segment. The Cytoplasmic segment spans residues 273–309 (KNVIHITIAGIYGTWYYLSNSDQGEPKHPALGAFKRA). Residues 310-330 (MTYCFGSVCFGSLIVSIIQLI) traverse the membrane as a helical segment. Over 331–346 (RSFVQILKQNAFGSGD) the chain is Extracellular. A helical membrane pass occupies residues 347–367 (NCAGCGFLILDFVLGFIDWIV). Residues 368–412 (RYFNHYAYCYVALYGKSYLKSARDTFDLIRFKGMDALINDCFINT) are Cytoplasmic-facing. The chain crosses the membrane as a helical span at residues 413-433 (SLNLYSMFVGYVVALLAYFYL). The Extracellular segment spans residues 434-460 (KFTDPAYNSSGTFYAPVVAFSFLISGQ). Asn441 carries N-linked (GlcNAc...) asparagine glycosylation. A helical transmembrane segment spans residues 461 to 481 (ITRIALTVISSGISTFFVALA). Residues 482–513 (KDPEVFQMTNRDRFDEIFRNYPQVLQKITSDH) lie on the Cytoplasmic side of the membrane.

It belongs to the CTL (choline transporter-like) family.

The protein resides in the cell membrane. In terms of biological role, probably involved in transport through the plasma membrane. The chain is Protein PNS1 (PNS1) from Debaryomyces hansenii (strain ATCC 36239 / CBS 767 / BCRC 21394 / JCM 1990 / NBRC 0083 / IGC 2968) (Yeast).